The following is a 529-amino-acid chain: Protein PNS1 (529 aa).

Residues 1-58 are disordered; it reads MSQQYSYGGGGGAGYPPPQMQPPNSYAQANYQGQPQGAQNQYYNGQQPHHNAPQQYYG. The Cytoplasmic segment spans residues 1-84; sequence MSQQYSYGGG…LQPKPKFRDP (84 aa). Over residues 22-48 the composition is skewed to low complexity; sequence PPNSYAQANYQGQPQGAQNQYYNGQQP. The chain crosses the membrane as a helical span at residues 85–105; sequence IFLVLFLLVFAGFIALSVICL. At 106–132 the chain is on the extracellular side; it reads RSYSNADVNVSIGRANVAGSTLNGHTA. N114 carries N-linked (GlcNAc...) asparagine glycosylation. The chain crosses the membrane as a helical span at residues 133–153; sequence IMFMICCAVALVLSFVYILLV. The Cytoplasmic portion of the chain corresponds to 154–158; it reads RTFPK. Residues 159-179 form a helical membrane-spanning segment; sequence IILEATLLLTTLSNVAFCVYL. The Extracellular portion of the chain corresponds to 180-184; sequence WVRGN. The chain crosses the membrane as a helical span at residues 185-205; the sequence is TAAAIIFTIFAVLSVIAYFFM. Over 206–230 the chain is Cytoplasmic; the sequence is RKRIPLAKLILVTVIRTAEQYKSVY. A helical membrane pass occupies residues 231-251; sequence VVALGGLIVETAFSAWTSWVV. The Extracellular segment spans residues 252–271; that stretch reads VAAYQRFEPSGQAAGSSSSN. The N-linked (GlcNAc...) asparagine glycan is linked to N271. Residues 272 to 292 traverse the membrane as a helical segment; that stretch reads ASIIGIMVFIVFAYYWISEVI. Residues 293–294 are Cytoplasmic-facing; sequence KN. Residues 295–315 form a helical membrane-spanning segment; sequence IAFTTVAGIFGVAYYNANKVA. The Extracellular portion of the chain corresponds to 316-325; the sequence is NAAWGAFRRS. Residues 326–346 form a helical membrane-spanning segment; it reads MTYSLGSICFGSLIVAILDLL. Residues 347–362 are Cytoplasmic-facing; sequence RALFNILQSQAASDGD. The chain crosses the membrane as a helical span at residues 363 to 383; it reads MTGQILACVAGCCVSCIQGLV. Residues 384-427 are Extracellular-facing; sequence DYFNRYAYINIALYGNGYITAAKETWALLKDRGIDAIINDSLVN. N422 carries N-linked (GlcNAc...) asparagine glycosylation. Residues 428–448 traverse the membrane as a helical segment; sequence IVFNCGAFIIGLLTALFAFIY. The Cytoplasmic segment spans residues 449–464; sequence EQLTNPRYLQNDAGYY. A helical transmembrane segment spans residues 465–485; the sequence is SIVLLVAFGLGFNIALSVGAG. At 486 to 529 the chain is on the extracellular side; sequence SIASGVSTYFVALAEDPYILQGKNPELFEMIRQQYPQVVQGVNH.

This sequence belongs to the CTL (choline transporter-like) family.

Its subcellular location is the cell membrane. Probably involved in transport through the plasma membrane. This chain is Protein PNS1 (PNS1), found in Mycosarcoma maydis (Corn smut fungus).